A 293-amino-acid chain; its full sequence is N(1)-aminopropylagmatine ureohydrolase (293 aa).

Residues histidine 105, aspartate 128, histidine 130, aspartate 132, aspartate 210, and aspartate 212 each contribute to the Mn(2+) site.

This sequence belongs to the arginase family. The cofactor is Mn(2+).

The catalysed reaction is N(1)-(3-aminopropyl)agmatine + H2O = urea + spermidine. Its pathway is amine and polyamine biosynthesis; spermidine biosynthesis. Involved in the biosynthesis of polyamines which are thought to support the growth of thermophilic microorganisms under high-temperature conditions. It seems that long-chain and branched-chain of polyamines effectively stabilize DNA and RNA, respectively. Catalyzes the decarboxylation of N1-(3-aminopropyl)agmatine to yield spermidine and urea. Does not act on agmatine. In Thermus thermophilus (strain ATCC BAA-163 / DSM 7039 / HB27), this protein is N(1)-aminopropylagmatine ureohydrolase.